Reading from the N-terminus, the 304-residue chain is Bifunctional protein FolD 3 (304 aa).

NADP(+) contacts are provided by residues 172-174 (GRS), serine 197, and isoleucine 238.

Belongs to the tetrahydrofolate dehydrogenase/cyclohydrolase family. As to quaternary structure, homodimer.

The catalysed reaction is (6R)-5,10-methylene-5,6,7,8-tetrahydrofolate + NADP(+) = (6R)-5,10-methenyltetrahydrofolate + NADPH. The enzyme catalyses (6R)-5,10-methenyltetrahydrofolate + H2O = (6R)-10-formyltetrahydrofolate + H(+). It functions in the pathway one-carbon metabolism; tetrahydrofolate interconversion. Functionally, catalyzes the oxidation of 5,10-methylenetetrahydrofolate to 5,10-methenyltetrahydrofolate and then the hydrolysis of 5,10-methenyltetrahydrofolate to 10-formyltetrahydrofolate. This is Bifunctional protein FolD 3 from Rhizorhabdus wittichii (strain DSM 6014 / CCUG 31198 / JCM 15750 / NBRC 105917 / EY 4224 / RW1) (Sphingomonas wittichii).